Consider the following 214-residue polypeptide: Pyrrolidone-carboxylate peptidase 2 (214 aa).

Active-site residues include Glu78, Cys141, and His165.

Belongs to the peptidase C15 family. In terms of assembly, homotetramer.

It localises to the cytoplasm. It catalyses the reaction Release of an N-terminal pyroglutamyl group from a polypeptide, the second amino acid generally not being Pro.. Functionally, removes 5-oxoproline from various penultimate amino acid residues except L-proline. This is Pyrrolidone-carboxylate peptidase 2 from Streptococcus pneumoniae serotype 4 (strain ATCC BAA-334 / TIGR4).